The chain runs to 525 residues: 2,3-bisphosphoglycerate-independent phosphoglycerate mutase (525 aa).

Residues D18 and S68 each contribute to the Mn(2+) site. S68 functions as the Phosphoserine intermediate in the catalytic mechanism. Substrate contacts are provided by residues H129, 159-160 (RD), R194, R200, 269-272 (RADR), and K345. The Mn(2+) site is built by D413, H417, D454, H455, and H473.

The protein belongs to the BPG-independent phosphoglycerate mutase family. As to quaternary structure, monomer. Mn(2+) is required as a cofactor.

It catalyses the reaction (2R)-2-phosphoglycerate = (2R)-3-phosphoglycerate. It participates in carbohydrate degradation; glycolysis; pyruvate from D-glyceraldehyde 3-phosphate: step 3/5. In terms of biological role, catalyzes the interconversion of 2-phosphoglycerate and 3-phosphoglycerate. This chain is 2,3-bisphosphoglycerate-independent phosphoglycerate mutase, found in Chromohalobacter salexigens (strain ATCC BAA-138 / DSM 3043 / CIP 106854 / NCIMB 13768 / 1H11).